The sequence spans 403 residues: S-adenosylmethionine synthase (403 aa).

Position 17 (histidine 17) interacts with ATP. Mg(2+) is bound at residue aspartate 19. Glutamate 45 contacts K(+). The L-methionine site is built by glutamate 58 and glutamine 101. Positions 101-111 are flexible loop; that stretch reads QSPDIAMGVDR. Residues 177-179, 244-245, aspartate 253, 259-260, alanine 276, and lysine 280 contribute to the ATP site; these read DGK, RF, and RK. Aspartate 253 contacts L-methionine. L-methionine is bound at residue lysine 284.

It belongs to the AdoMet synthase family. Homotetramer; dimer of dimers. Mg(2+) serves as cofactor. K(+) is required as a cofactor.

Its subcellular location is the cytoplasm. It catalyses the reaction L-methionine + ATP + H2O = S-adenosyl-L-methionine + phosphate + diphosphate. It participates in amino-acid biosynthesis; S-adenosyl-L-methionine biosynthesis; S-adenosyl-L-methionine from L-methionine: step 1/1. In terms of biological role, catalyzes the formation of S-adenosylmethionine (AdoMet) from methionine and ATP. The overall synthetic reaction is composed of two sequential steps, AdoMet formation and the subsequent tripolyphosphate hydrolysis which occurs prior to release of AdoMet from the enzyme. The polypeptide is S-adenosylmethionine synthase (Geobacillus kaustophilus (strain HTA426)).